The sequence spans 1400 residues: DNA-directed RNA polymerase subunit beta' (1400 aa).

Positions 71, 73, 86, and 89 each coordinate Zn(2+). Mg(2+) is bound by residues Asp462, Asp464, and Asp466. Cys811, Cys885, Cys892, and Cys895 together coordinate Zn(2+).

Belongs to the RNA polymerase beta' chain family. In terms of assembly, the RNAP catalytic core consists of 2 alpha, 1 beta, 1 beta' and 1 omega subunit. When a sigma factor is associated with the core the holoenzyme is formed, which can initiate transcription. Requires Mg(2+) as cofactor. Zn(2+) serves as cofactor.

The catalysed reaction is RNA(n) + a ribonucleoside 5'-triphosphate = RNA(n+1) + diphosphate. Its function is as follows. DNA-dependent RNA polymerase catalyzes the transcription of DNA into RNA using the four ribonucleoside triphosphates as substrates. This chain is DNA-directed RNA polymerase subunit beta', found in Brucella abortus (strain S19).